A 330-amino-acid chain; its full sequence is Putative F-box protein At1g57690 (330 aa).

Positions 25 to 72 (VDIISSLPDVILQHILFSFQTKYAIRTSVLSKRWRHEADAINKALSQY) constitute an F-box domain.

The protein is Putative F-box protein At1g57690 of Arabidopsis thaliana (Mouse-ear cress).